Here is a 370-residue protein sequence, read N- to C-terminus: DNA replication and repair protein RecF (370 aa).

An ATP-binding site is contributed by 30-37 (GDNGSGKT).

Belongs to the RecF family.

The protein resides in the cytoplasm. In terms of biological role, the RecF protein is involved in DNA metabolism; it is required for DNA replication and normal SOS inducibility. RecF binds preferentially to single-stranded, linear DNA. It also seems to bind ATP. The sequence is that of DNA replication and repair protein RecF from Stutzerimonas stutzeri (strain A1501) (Pseudomonas stutzeri).